The sequence spans 1343 residues: DNA-directed RNA polymerase subunit beta (1343 aa).

This sequence belongs to the RNA polymerase beta chain family. In terms of assembly, the RNAP catalytic core consists of 2 alpha, 1 beta, 1 beta' and 1 omega subunit. When a sigma factor is associated with the core the holoenzyme is formed, which can initiate transcription.

The catalysed reaction is RNA(n) + a ribonucleoside 5'-triphosphate = RNA(n+1) + diphosphate. In terms of biological role, DNA-dependent RNA polymerase catalyzes the transcription of DNA into RNA using the four ribonucleoside triphosphates as substrates. This Shewanella woodyi (strain ATCC 51908 / MS32) protein is DNA-directed RNA polymerase subunit beta.